A 145-amino-acid chain; its full sequence is Large ribosomal subunit protein bL9 (145 aa).

This sequence belongs to the bacterial ribosomal protein bL9 family.

In terms of biological role, binds to the 23S rRNA. This Ureaplasma urealyticum serovar 10 (strain ATCC 33699 / Western) protein is Large ribosomal subunit protein bL9.